The sequence spans 349 residues: GATA zinc finger domain-containing protein 24 (349 aa).

Composition is skewed to low complexity over residues 95-169 (NINR…VNKN) and 177-195 (NKSCKNNNINNNNNNNNNS). 2 disordered regions span residues 95-227 (NINR…PVIK) and 250-294 (DYDY…KPVQ). The segment covering 196–212 (ENKEKNNINNNNEKENN) has biased composition (basic and acidic residues). Positions 257 to 272 (SNESSSPTLSASTLSS) are enriched in low complexity. Residues 278 to 289 (KVLKRGRGRPSK) show a composition bias toward basic residues. The GATA-type zinc-finger motif lies at 295 to 323 (CFSCFRSNTPEWRKGKDKDGNVIDLCNAC).

This Dictyostelium discoideum (Social amoeba) protein is GATA zinc finger domain-containing protein 24 (gtaX).